Here is a 573-residue protein sequence, read N- to C-terminus: Peptidyl-prolyl cis-trans isomerase-like 2 (573 aa).

Residues 37-119 (QRLPFDCCAL…GNLHDPITYK (83 aa)) enclose the U-box domain. The tract at residues 223 to 247 (KNKSGQSPAPTPSKIDDGKGQEKKE) is disordered. Basic and acidic residues predominate over residues 236-247 (KIDDGKGQEKKE). Positions 312 to 469 (SKAYATITTN…RDIVIQGVTV (158 aa)) constitute a PPIase cyclophilin-type domain. Residues 489-510 (DQSDAALKRRAEAQKEREKDRT) show a composition bias toward basic and acidic residues. A disordered region spans residues 489 to 515 (DQSDAALKRRAEAQKEREKDRTTWLGT).

This sequence belongs to the cyclophilin-type PPIase family. PPIL2 subfamily.

It is found in the nucleus. It catalyses the reaction [protein]-peptidylproline (omega=180) = [protein]-peptidylproline (omega=0). It carries out the reaction S-ubiquitinyl-[E2 ubiquitin-conjugating enzyme]-L-cysteine + [acceptor protein]-L-lysine = [E2 ubiquitin-conjugating enzyme]-L-cysteine + N(6)-ubiquitinyl-[acceptor protein]-L-lysine.. It participates in protein modification; protein ubiquitination. May catalyze the cis-trans isomerization of proline imidic peptide bonds in oligopeptides thereby assisting the folding of proteins. May also function as a chaperone, playing a role in intracellular transport of proteins. May also have a protein ubiquitin ligase activity acting as an E3 ubiquitin protein ligase or as a ubiquitin-ubiquitin ligase promoting elongation of ubiquitin chains on proteins. The sequence is that of Peptidyl-prolyl cis-trans isomerase-like 2 (CYP8) from Cryptococcus neoformans var. neoformans serotype D (strain B-3501A) (Filobasidiella neoformans).